The primary structure comprises 629 residues: MAPPGSRTVLLLALTIIARTQALKPTHYLTKHDVERLKASLDRPFTSLESAFYSIVGLSSLGAQVPDEKKACTFIKSNLDPSNVDSLFYPPQSSQALSGCEISISNETKDLLLAAVSEDSSVTQIYHAVAALSGFGLPLASQEALGALTARLSKEETVLATVQALQTASYLSQQADLRSIVEEIEDLVARLDELGGVYLQFEEGLLETTALFVAATYKLMDHEGTEPSIKEDQVIQLMNTIFSKKNFESLPEAFSVASAAAALSQNRYHVPVVVVPEGSPSDTQEQAFLRLQVTNVLSQPLTQATVKLEHAKSVASRATVLQKTSFTPVGDVFELNFVNVKFSSGYYDFSVKVEGDNRYIANTVELRVKISTEVGITNVDLSTVDKDQSIAPKTTRVTYPAKAKGPFIADSPQNFALFFQLVDVNTGAELTPHQTFVRLHNQKTGQEVVFVAEPDSKNVYRFELDTSERKIEFDSASGTYTLYLIIGDATLKNPIHWNVADVVIRFPEEDAPSTVLSKNLFTAKQEIQHLFRDPEKRPPTVVSNTFTGLILSPLLLLFALWIRIGAKISNFTFGLTIIFHLGHAMLAMYVYWTQLNMFQTLKYLAILGSVTFLAGNRMLAQQAIKRTAH.

Positions 1–22 (MAPPGSRTVLLLALTIIARTQA) are cleaved as a signal peptide. Over 23–541 (LKPTHYLTKH…RDPEKRPPTV (519 aa)) the chain is Lumenal. A glycan (N-linked (GlcNAc...) asparagine) is linked at Asn-106. Lys-154 is covalently cross-linked (Glycyl lysine isopeptide (Lys-Gly) (interchain with G-Cter in ubiquitin)). The helical transmembrane segment at 542 to 562 (VSNTFTGLILSPLLLLFALWI) threads the bilayer. The Cytoplasmic segment spans residues 563-570 (RIGAKISN). Residues 571–591 (FTFGLTIIFHLGHAMLAMYVY) traverse the membrane as a helical segment. Over 592–594 (WTQ) the chain is Lumenal. The chain crosses the membrane as a helical span at residues 595 to 615 (LNMFQTLKYLAILGSVTFLAG). Topologically, residues 616–629 (NRMLAQQAIKRTAH) are cytoplasmic.

Belongs to the SWP1 family. In terms of assembly, component of the oligosaccharyltransferase (OST) complex. OST exists in two different complex forms which contain common core subunits RPN1, RPN2, OST48, OST4, DAD1 and TMEM258, either STT3A or STT3B as catalytic subunits, and form-specific accessory subunits. STT3A complex assembly occurs through the formation of 3 subcomplexes. Subcomplex 1 contains RPN1 and TMEM258, subcomplex 2 contains the STT3A-specific subunits STT3A, DC2/OSTC, and KCP2 as well as the core subunit OST4, and subcomplex 3 contains RPN2, DAD1, and OST48. The STT3A complex can form stable complexes with the Sec61 complex or with both the Sec61 and TRAP complexes. Interacts with DDI2. Interacts with TMEM35A/NACHO.

The protein localises to the endoplasmic reticulum. Its subcellular location is the endoplasmic reticulum membrane. The protein operates within protein modification; protein glycosylation. Its function is as follows. Subunit of the oligosaccharyl transferase (OST) complex that catalyzes the initial transfer of a defined glycan (Glc(3)Man(9)GlcNAc(2) in eukaryotes) from the lipid carrier dolichol-pyrophosphate to an asparagine residue within an Asn-X-Ser/Thr consensus motif in nascent polypeptide chains, the first step in protein N-glycosylation. N-glycosylation occurs cotranslationally and the complex associates with the Sec61 complex at the channel-forming translocon complex that mediates protein translocation across the endoplasmic reticulum (ER). All subunits are required for a maximal enzyme activity. This chain is Dolichyl-diphosphooligosaccharide--protein glycosyltransferase subunit 2, found in Sus scrofa (Pig).